Reading from the N-terminus, the 188-residue chain is dCTP deaminase (188 aa).

DCTP-binding positions include 111-116 (KSTYAR), 135-137 (TLE), Gln156, Tyr170, and Gln180. The Proton donor/acceptor role is filled by Glu137.

The protein belongs to the dCTP deaminase family. In terms of assembly, homotrimer.

The catalysed reaction is dCTP + H2O + H(+) = dUTP + NH4(+). The protein operates within pyrimidine metabolism; dUMP biosynthesis; dUMP from dCTP (dUTP route): step 1/2. Functionally, catalyzes the deamination of dCTP to dUTP. The sequence is that of dCTP deaminase from Herminiimonas arsenicoxydans.